The following is a 172-amino-acid chain: uncharacterized protein (172 aa).

The next 4 membrane-spanning stretches (helical) occupy residues 1-21 (MLFI…SLSI), 41-61 (NSTL…IEAN), 72-92 (QIGL…IYEL), and 136-156 (FCQA…ILAV).

The protein resides in the cell membrane. This is an uncharacterized protein from Haemophilus influenzae (strain ATCC 51907 / DSM 11121 / KW20 / Rd).